A 244-amino-acid chain; its full sequence is Ras-related protein Rab-12 (244 aa).

Methionine 1 carries the N-acetylmethionine modification. Over residues 1–10 (MDPGAALQRR) the composition is skewed to low complexity. The interval 1–37 (MDPGAALQRRAGGGGGLGAGSPALSGGQGRRRKQPPR) is disordered. Serine 21 and serine 25 each carry phosphoserine. Glycine 52 lines the GDP pocket. Positions 52, 53, 54, 55, and 56 each coordinate GTP. Glycine 54, lysine 55, threonine 56, and serine 57 together coordinate GDP. A Mg(2+)-binding site is contributed by threonine 56. 2 short sequence motifs (switch) span residues 65-79 (DTFC…GVDF) and 97-114 (DTAG…YYRS). Positions 73 and 74 each coordinate GTP. 2 residues coordinate Mg(2+): threonine 74 and aspartate 97. Glycine 100 serves as a coordination point for GTP. Serine 106 is modified (phosphoserine; by LRRK2). Asparagine 155, lysine 156, aspartate 158, and cysteine 159 together coordinate GDP. GTP-binding residues include asparagine 155, lysine 156, and aspartate 158. Positions 186, 187, and 188 each coordinate GTP. GDP contacts are provided by alanine 187 and lysine 188. The interval 225–244 (QPEPEIPPELPPPRPHVRCC) is disordered. The segment covering 228 to 238 (PEIPPELPPPR) has biased composition (pro residues). Residues cysteine 243 and cysteine 244 are each lipidated (S-geranylgeranyl cysteine).

The protein belongs to the small GTPase superfamily. Rab family. As to quaternary structure, interacts with RABIF. Interacts with OPTN. Interacts with LRRK2; interaction facilitates phosphorylation of Ser-106. Interacts with GDI1, GDI2, CHM and CHML; these interactions are disrupted by phosphorylation on Ser-106. Interacts with RILPL1 and RILPL2; these interactions are dependent on phosphorylation of Ser-106. The cofactor is Mg(2+). Phosphorylation of Ser-106 in the switch II region by LRRK2 prevents the association of RAB regulatory proteins, including CHM, CHML and RAB GDP dissociation inhibitors GDI1 and GDI2.

It localises to the recycling endosome membrane. The protein localises to the lysosome membrane. The protein resides in the golgi apparatus membrane. Its subcellular location is the cytoplasmic vesicle. It is found in the autophagosome. It carries out the reaction GTP + H2O = GDP + phosphate + H(+). Regulated by guanine nucleotide exchange factors (GEFs) including DENND3 which promote the exchange of bound GDP for free GTP. Regulated by GTPase activating proteins (GAPs) which increase the GTP hydrolysis activity. Inhibited by GDP dissociation inhibitors (GDIs). Its function is as follows. The small GTPases Rab are key regulators of intracellular membrane trafficking, from the formation of transport vesicles to their fusion with membranes. Rabs cycle between an inactive GDP-bound form and an active GTP-bound form that is able to recruit to membranes different sets of downstream effectors directly responsible for vesicle formation, movement, tethering and fusion. RAB12 may play a role in protein transport from recycling endosomes to lysosomes regulating, for instance, the degradation of the transferrin receptor. Involved in autophagy. The protein is Ras-related protein Rab-12 of Homo sapiens (Human).